A 456-amino-acid chain; its full sequence is Enolase (456 aa).

Residue glutamine 167 participates in (2R)-2-phosphoglycerate binding. Glutamate 209 (proton donor) is an active-site residue. The Mg(2+) site is built by aspartate 250, glutamate 312, and aspartate 339. (2R)-2-phosphoglycerate-binding residues include lysine 364, arginine 393, serine 394, and lysine 415. Lysine 364 serves as the catalytic Proton acceptor.

Belongs to the enolase family. Mg(2+) serves as cofactor.

It localises to the cytoplasm. The protein localises to the secreted. The protein resides in the cell surface. It carries out the reaction (2R)-2-phosphoglycerate = phosphoenolpyruvate + H2O. It functions in the pathway carbohydrate degradation; glycolysis; pyruvate from D-glyceraldehyde 3-phosphate: step 4/5. In terms of biological role, catalyzes the reversible conversion of 2-phosphoglycerate (2-PG) into phosphoenolpyruvate (PEP). It is essential for the degradation of carbohydrates via glycolysis. The protein is Enolase of Mycoplasmopsis pulmonis (strain UAB CTIP) (Mycoplasma pulmonis).